We begin with the raw amino-acid sequence, 338 residues long: Phosphate acyltransferase (338 aa).

This sequence belongs to the PlsX family. Homodimer. Probably interacts with PlsY.

It is found in the cytoplasm. It catalyses the reaction a fatty acyl-[ACP] + phosphate = an acyl phosphate + holo-[ACP]. Its pathway is lipid metabolism; phospholipid metabolism. Its function is as follows. Catalyzes the reversible formation of acyl-phosphate (acyl-PO(4)) from acyl-[acyl-carrier-protein] (acyl-ACP). This enzyme utilizes acyl-ACP as fatty acyl donor, but not acyl-CoA. The chain is Phosphate acyltransferase from Salinibacter ruber (strain DSM 13855 / M31).